The following is a 914-amino-acid chain: MRFTATAAALVASSIPATLGQHVRDLSNEKWTLSSDALNHTVPGNLPSHAHLDLLKAGVIDDPYHGLNDFNLRWIPESNWTYTTDKIKDLMPIEFCGKYVASTNNQYRQYSFDVSQILEGCNEDPILKIDFGSAPNIVNAIAEDRNSPVWPDGIQQTYEYPNRWFMRKEQSDFGWDWGPAFAPAGPWKPAYIVQLPKAQNIHVLNTDLDIYRKGQINHLPPDQSQPWVVNASIDFVGSLPPNPSMSIEFKDTKSGEILTSKRIGNVTVSGNSVTGVTVLGGVTPKLWWPLGLGDQNLYNITVTVTGHQNQTLAHVTKRTGFRTIFLNQRNITDAQLAQGIAPGANWHFEVNGHEFYAKGSNIIPPDAFWPRVTEARMARLFDAVVAGNQNMLRVWSSGIYLHDFIYDLADERGILLWSEFEFSDALYPVDDAFLDNIAAEVVYNVRRVNHHPSLALWAGGNEIESLMLPTVERKAPEEYAKYVGEYEKLYISLILPLVYQNTRSITYSPSSTTEGYLDVDLSAPVPMVERYHNTTPGSYYGDTDFYNYDSSVSFNSHVYPVGRFANEFGYHSMPSLQTWQQAVDPEDLHFNSTTVMLRNHHYPAGGTFTDNFHNTSLGMGEMTIAVQRYYPIPNKLDSVANFSAWCHATQLFQADMYKSEIQFYRRGSGMPERQLGSLYWQLEDIWQAPSWAGIEYGGRWKVLHYVSRDIYQPIIVSPFWNYTTGDLDLYVTSDLWESAKGKVNLTWLDLSGTPLPHNAGTPGSVPFNVGALNTTKIYSTNIKNLTLPNPKDAILVLSLSGEGHLPNSDKKTTFTHQNHFTPVFPKDLALVDPGLELSYNTKSKTFTVEAKSGVSLYTWLDYPADVVGYFDENAFVLLPGQKKEIGFTVQEDNTDGKWVQGVTVQSLWNQTLEK.

The N-terminal stretch at 1-20 (MRFTATAAALVASSIPATLG) is a signal peptide. N-linked (GlcNAc...) asparagine glycosylation is found at asparagine 39, asparagine 79, asparagine 230, asparagine 265, asparagine 299, asparagine 309, and asparagine 330. Glutamate 462 serves as the catalytic Proton donor. Asparagine 591, asparagine 614, asparagine 641, asparagine 721, asparagine 744, asparagine 773, asparagine 784, and asparagine 909 each carry an N-linked (GlcNAc...) asparagine glycan.

The protein belongs to the glycosyl hydrolase 2 family. Beta-mannosidase A subfamily. In terms of assembly, homodimer.

The protein localises to the secreted. It catalyses the reaction Hydrolysis of terminal, non-reducing beta-D-mannose residues in beta-D-mannosides.. It functions in the pathway glycan metabolism; N-glycan degradation. Exoglycosidase that cleaves the single beta-linked mannose residue from the non-reducing end of beta-mannosidic oligosaccharides of various complexity and length. Involved in the degradation of polymeric mannan and galactomannan. The polypeptide is Beta-mannosidase A (mndA) (Aspergillus oryzae (strain ATCC 42149 / RIB 40) (Yellow koji mold)).